The sequence spans 261 residues: NAD(P)H-quinone oxidoreductase subunit K, chloroplastic (261 aa).

[4Fe-4S] cluster is bound by residues cysteine 64, cysteine 65, cysteine 129, and cysteine 160.

It belongs to the complex I 20 kDa subunit family. NDH is composed of at least 16 different subunits, 5 of which are encoded in the nucleus. Requires [4Fe-4S] cluster as cofactor.

It localises to the plastid. It is found in the chloroplast thylakoid membrane. It carries out the reaction a plastoquinone + NADH + (n+1) H(+)(in) = a plastoquinol + NAD(+) + n H(+)(out). It catalyses the reaction a plastoquinone + NADPH + (n+1) H(+)(in) = a plastoquinol + NADP(+) + n H(+)(out). Functionally, NDH shuttles electrons from NAD(P)H:plastoquinone, via FMN and iron-sulfur (Fe-S) centers, to quinones in the photosynthetic chain and possibly in a chloroplast respiratory chain. The immediate electron acceptor for the enzyme in this species is believed to be plastoquinone. Couples the redox reaction to proton translocation, and thus conserves the redox energy in a proton gradient. The chain is NAD(P)H-quinone oxidoreductase subunit K, chloroplastic from Physcomitrium patens (Spreading-leaved earth moss).